We begin with the raw amino-acid sequence, 288 residues long: MNNIIDGKALANEILADLKLEIQELTSQTNASPKLAIVLVGDNPASIIYVRHKIKNAHKIGIYTLLINLSATIHTNDLISKINELNLDNEISGIIVQLPLPSSIDKNKILSAVSPSKDIDGFHPLNVGYLHSGISQGFIPCTALGCLAAIKKYEPNLTGKNVVIIGRSNIVGKPLSALLLKENCSVTICHSKTHNLRSITSKADIVVAAIGSPLKLTAEYFNPKSIVIDVGINRISSNKIIGDVDFENVQSKVQYITPVPGGIGPMTIAFLLKNTVKAFKDSLYTLDT.

Residues 166–168 (GRS), Ser-191, and Ile-232 each bind NADP(+).

It belongs to the tetrahydrofolate dehydrogenase/cyclohydrolase family. Homodimer.

It catalyses the reaction (6R)-5,10-methylene-5,6,7,8-tetrahydrofolate + NADP(+) = (6R)-5,10-methenyltetrahydrofolate + NADPH. The enzyme catalyses (6R)-5,10-methenyltetrahydrofolate + H2O = (6R)-10-formyltetrahydrofolate + H(+). It functions in the pathway one-carbon metabolism; tetrahydrofolate interconversion. Catalyzes the oxidation of 5,10-methylenetetrahydrofolate to 5,10-methenyltetrahydrofolate and then the hydrolysis of 5,10-methenyltetrahydrofolate to 10-formyltetrahydrofolate. The polypeptide is Bifunctional protein FolD (Rickettsia africae (strain ESF-5)).